A 291-amino-acid chain; its full sequence is UPF0276 protein VV1_0952 (291 aa).

Belongs to the UPF0276 family.

The chain is UPF0276 protein VV1_0952 from Vibrio vulnificus (strain CMCP6).